Reading from the N-terminus, the 711-residue chain is Probable cyclic nucleotide-gated ion channel 10 (711 aa).

Residues 1-81 (MAFSHDNRVR…QDSFLQNWNK (81 aa)) lie on the Cytoplasmic side of the membrane. A helical transmembrane segment spans residues 82-102 (IFLFACVVALAIDPLFFYIPI). Topologically, residues 103 to 116 (VDSARHCLTLDSKL) are extracellular. A helical transmembrane segment spans residues 117 to 137 (EIAASLLRTLIDAFYIIHIVF). At 138-170 (QFRTAYIAPSSRVFGRGELVDDAKAIALKYLSS) the chain is on the cytoplasmic side. The helical transmembrane segment at 171–191 (YFIIDLLSILPLPQIVVLAVI) threads the bilayer. Residues 192–204 (PSVNQPVSLLTKD) are Extracellular-facing. A helical membrane pass occupies residues 205–225 (YLKFSIIAQYVPRILRMYPLY). Residues 226-243 (TEVTRTSGIVTETAWAGA) are Cytoplasmic-facing. Residues 244-264 (AWNLSLYMLASHVFGALWYLI) form a helical membrane-spanning segment. Residues 265-366 (SVEREDRCWQ…GQNLQTSKFV (102 aa)) are Extracellular-facing. Residues 367 to 387 (GEIIFAISICISGLVLFALLI) traverse the membrane as a helical segment. At 388-711 (GNMQKYLEST…DFTANHTTDP (324 aa)) the chain is on the cytoplasmic side. A nucleoside 3',5'-cyclic phosphate contacts are provided by residues 473 to 603 (LFEI…TFRF) and glutamate 544. The segment at 589–604 (FRRLHSKQLQHTFRFY) is calmodulin-binding. An IQ domain is found at 609–638 (RTWSVSFIQAAWRRYCRRKLAKSLRDEEDR). Positions 689–711 (YTLPLLPQKPTEPDFTANHTTDP) are disordered.

The protein belongs to the cyclic nucleotide-gated cation channel (TC 1.A.1.5) family. Homotetramer or heterotetramer.

Its subcellular location is the cell membrane. Probable cyclic nucleotide-gated ion channel. The polypeptide is Probable cyclic nucleotide-gated ion channel 10 (CNGC10) (Arabidopsis thaliana (Mouse-ear cress)).